A 437-amino-acid polypeptide reads, in one-letter code: Putative metabolite transport protein NicT (437 aa).

Helical transmembrane passes span 28–48 (LIPF…NVGF), 66–86 (LGAG…NLIL), 93–113 (LWIA…MFVT), 123–143 (FLLG…LTMW), 152–172 (IIAL…PISG), 189–209 (WLFL…FWAL), 254–274 (VWML…MGFW), 290–310 (IGLL…MIGA), 320–340 (WHII…TLFS), 347–367 (VVLF…FFSL), 374–394 (GTAA…AGLV), and 411–431 (AALW…IALP).

It belongs to the major facilitator superfamily.

It localises to the membrane. Functionally, probable transporter, possibly involved in the aerobic nicotinate degradation pathway. In Pseudomonas putida (strain ATCC 47054 / DSM 6125 / CFBP 8728 / NCIMB 11950 / KT2440), this protein is Putative metabolite transport protein NicT (nicT).